The primary structure comprises 291 residues: 33 kDa chaperonin (291 aa).

Disulfide bonds link Cys-229–Cys-231 and Cys-262–Cys-265.

The protein belongs to the HSP33 family. In terms of processing, under oxidizing conditions two disulfide bonds are formed involving the reactive cysteines. Under reducing conditions zinc is bound to the reactive cysteines and the protein is inactive.

It is found in the cytoplasm. Redox regulated molecular chaperone. Protects both thermally unfolding and oxidatively damaged proteins from irreversible aggregation. Plays an important role in the bacterial defense system toward oxidative stress. This chain is 33 kDa chaperonin, found in Vibrio cholerae serotype O1 (strain ATCC 39315 / El Tor Inaba N16961).